We begin with the raw amino-acid sequence, 258 residues long: UPF0246 protein Jann_0444 (258 aa).

The protein belongs to the UPF0246 family.

This chain is UPF0246 protein Jann_0444, found in Jannaschia sp. (strain CCS1).